The chain runs to 317 residues: Sulfate adenylyltransferase subunit 2 (317 aa).

2 disordered regions span residues 1–21 (MPDS…APLD) and 298–317 (RAID…EGYF).

The protein belongs to the PAPS reductase family. CysD subfamily. In terms of assembly, heterodimer composed of CysD, the smaller subunit, and CysN.

The enzyme catalyses sulfate + ATP + H(+) = adenosine 5'-phosphosulfate + diphosphate. It functions in the pathway sulfur metabolism; hydrogen sulfide biosynthesis; sulfite from sulfate: step 1/3. Functionally, with CysN forms the ATP sulfurylase (ATPS) that catalyzes the adenylation of sulfate producing adenosine 5'-phosphosulfate (APS) and diphosphate, the first enzymatic step in sulfur assimilation pathway. APS synthesis involves the formation of a high-energy phosphoric-sulfuric acid anhydride bond driven by GTP hydrolysis by CysN coupled to ATP hydrolysis by CysD. This is Sulfate adenylyltransferase subunit 2 from Rhizobium johnstonii (strain DSM 114642 / LMG 32736 / 3841) (Rhizobium leguminosarum bv. viciae).